The following is a 196-amino-acid chain: ATP-dependent Clp protease proteolytic subunit (196 aa).

Serine 98 acts as the Nucleophile in catalysis. Histidine 123 is an active-site residue.

The protein belongs to the peptidase S14 family. In terms of assembly, fourteen ClpP subunits assemble into 2 heptameric rings which stack back to back to give a disk-like structure with a central cavity, resembling the structure of eukaryotic proteasomes.

It is found in the cytoplasm. It carries out the reaction Hydrolysis of proteins to small peptides in the presence of ATP and magnesium. alpha-casein is the usual test substrate. In the absence of ATP, only oligopeptides shorter than five residues are hydrolyzed (such as succinyl-Leu-Tyr-|-NHMec, and Leu-Tyr-Leu-|-Tyr-Trp, in which cleavage of the -Tyr-|-Leu- and -Tyr-|-Trp bonds also occurs).. Functionally, cleaves peptides in various proteins in a process that requires ATP hydrolysis. Has a chymotrypsin-like activity. Plays a major role in the degradation of misfolded proteins. The chain is ATP-dependent Clp protease proteolytic subunit from Actinobacillus pleuropneumoniae serotype 7 (strain AP76).